The primary structure comprises 189 residues: UPF0340 protein EF_1967 (189 aa).

This sequence belongs to the UPF0340 family.

This Enterococcus faecalis (strain ATCC 700802 / V583) protein is UPF0340 protein EF_1967.